A 242-amino-acid polypeptide reads, in one-letter code: 3-deoxy-manno-octulosonate cytidylyltransferase (242 aa).

The protein belongs to the KdsB family.

It localises to the cytoplasm. The catalysed reaction is 3-deoxy-alpha-D-manno-oct-2-ulosonate + CTP = CMP-3-deoxy-beta-D-manno-octulosonate + diphosphate. It participates in nucleotide-sugar biosynthesis; CMP-3-deoxy-D-manno-octulosonate biosynthesis; CMP-3-deoxy-D-manno-octulosonate from 3-deoxy-D-manno-octulosonate and CTP: step 1/1. Its pathway is bacterial outer membrane biogenesis; lipopolysaccharide biosynthesis. In terms of biological role, activates KDO (a required 8-carbon sugar) for incorporation into bacterial lipopolysaccharide in Gram-negative bacteria. The protein is 3-deoxy-manno-octulosonate cytidylyltransferase of Anaeromyxobacter dehalogenans (strain 2CP-1 / ATCC BAA-258).